The primary structure comprises 89 residues: Small ribosomal subunit protein uS15 (89 aa).

It belongs to the universal ribosomal protein uS15 family. In terms of assembly, part of the 30S ribosomal subunit. Forms a bridge to the 50S subunit in the 70S ribosome, contacting the 23S rRNA.

Functionally, one of the primary rRNA binding proteins, it binds directly to 16S rRNA where it helps nucleate assembly of the platform of the 30S subunit by binding and bridging several RNA helices of the 16S rRNA. Forms an intersubunit bridge (bridge B4) with the 23S rRNA of the 50S subunit in the ribosome. This Mycobacterium leprae (strain Br4923) protein is Small ribosomal subunit protein uS15.